Here is a 68-residue protein sequence, read N- to C-terminus: Alpha-conotoxin-like Mr1.2 (68 aa).

The first 21 residues, 1–21 (MGMRMMFTVFLLVVLATTVVS), serve as a signal peptide directing secretion. A propeptide spanning residues 22–48 (FTSDRGSDGRNAAAKDKASDLVALTVK) is cleaved from the precursor. Disulfide bonds link C50-C56 and C51-C64. Residues 52–54 (SNP) are ser-Xaa-Pro motif, crucial for potent interaction with nAChR. Residue N65 is modified to Asparagine amide.

The protein belongs to the conotoxin A superfamily. In terms of tissue distribution, expressed by the venom duct.

Its subcellular location is the secreted. In terms of biological role, alpha-conotoxins act on postsynaptic membranes, they bind to the nicotinic acetylcholine receptors (nAChR) and thus inhibit them. The chain is Alpha-conotoxin-like Mr1.2 from Conus marmoreus (Marble cone).